The chain runs to 410 residues: Tegument protein VP16 homolog (410 aa).

The tract at residues 388-410 (PPSPSEILPGDPPRPPTCGFLTR) is disordered.

Belongs to the herpesviridae tegument protein VP16 protein family. Associates with the VP16-induced complex; binding to host HCFC1 activates VP16 for association with the octamer motif-binding host protein POU2F1, to form a multiprotein-DNA complex responsible for activating transcription of the viral immediate early genes.

The protein resides in the virion tegument. It localises to the host nucleus. Functionally, transcriptional activator of immediate-early (IE) gene products (alpha genes). Acts as a key activator of lytic infection by initiating the lytic program through the assembly of the transcriptional regulatory VP16-induced complex composed of VP16 and two cellular factors, HCFC1 and POU2F 1. VP16-induced complex represents a regulatory switch: when it is on, it promotes IE-gene expression and thus lytic infection, and when it is off, it limits IE-gene transcription favoring latent infection. In terms of biological role, may play a role in the aggregation of tegument proteins around nucleocapsids during virus morphogenesis. This Varicella-zoster virus (strain Oka vaccine) (HHV-3) protein is Tegument protein VP16 homolog.